Consider the following 803-residue polypeptide: Bromodomain-containing protein 2 (803 aa).

Position 1 is an N-acetylmethionine (M1). Positions 1 to 28 (MLQNVTPHSKLPGEGNAGLLGLGPEAAA) are disordered. T6 carries the phosphothreonine modification. S37 is modified (phosphoserine). Residues 53-73 (ALQLTPANPPPPEVSNPKKPG) form a disordered region. Residues 74 to 180 (RVTNQLQYLH…KIFLQKVASM (107 aa)) form the Bromo 1 domain. 6 residues coordinate a protein: D112, Y155, N156, K157, D160, and D161. Disordered regions lie at residues 268-349 (PPAQ…LSEQ), 456-653 (EPLE…RQLS), and 739-803 (EKRL…SDSG). Over residues 285–298 (TTTPTPTAILAPGS) the composition is skewed to low complexity. Phosphoserine occurs at positions 298, 301, and 305. Basic and acidic residues predominate over residues 316-332 (MRRESGRPIKPPRKDLP). The region spanning 344–453 (GKLSEQLKHC…DVFEFRYAKM (110 aa)) is the Bromo 2 domain. A compositionally biased stretch (acidic residues) spans 481–515 (SSEESSSESSSEEDEEEDEEEEEEEEESESSDSEE). Basic residues predominate over residues 545-567 (KPKRKREKKEKKKKRKAEKHRGR). The Nuclear localization signal signature appears at 556 to 560 (KKKRK). In terms of domain architecture, NET spans 634–716 (DSEEEEESRP…SCLRKKPRKP (83 aa)). Position 635 is a phosphoserine (S635). A compositionally biased stretch (basic and acidic residues) spans 641–652 (SRPMSYDEKRQL). Over residues 777–797 (SASSSSSDSSSSSSSSSSSDT) the composition is skewed to low complexity.

This sequence belongs to the BET family. As to quaternary structure, homodimer. Interacts with E2F1. Interacts with (acetylated) STAT3; promoting STAT3 recruitment to chromatin. Interacts with CTCF; promoting BRD2 recruitment to chromatin.

The protein localises to the nucleus. Its subcellular location is the chromosome. Functionally, chromatin reader protein that specifically recognizes and binds histone H4 acetylated at 'Lys-5' and 'Lys-12' (H4K5ac and H4K12ac, respectively), thereby controlling gene expression and remodeling chromatin structures. Recruits transcription factors and coactivators to target gene sites, and activates RNA polymerase II machinery for transcriptional elongation. Plays a key role in genome compartmentalization via its association with CTCF and cohesin: recruited to chromatin by CTCF and promotes formation of topologically associating domains (TADs) via its ability to bind acetylated histones, contributing to CTCF boundary formation and enhancer insulation. Also recognizes and binds acetylated non-histone proteins, such as STAT3. Involved in inflammatory response by regulating differentiation of naive CD4(+) T-cells into T-helper Th17: recognizes and binds STAT3 acetylated at 'Lys-87', promoting STAT3 recruitment to chromatin. In addition to acetylated lysines, also recognizes and binds lysine residues on histones that are both methylated and acetylated on the same side chain to form N6-acetyl-N6-methyllysine (Kacme), an epigenetic mark of active chromatin associated with increased transcriptional initiation. Specifically binds histone H4 acetyl-methylated at 'Lys-5' and 'Lys-12' (H4K5acme and H4K12acme, respectively). The polypeptide is Bromodomain-containing protein 2 (BRD2) (Canis lupus familiaris (Dog)).